Reading from the N-terminus, the 98-residue chain is NADH-ubiquinone oxidoreductase chain 4L (98 aa).

3 helical membrane passes run Met1 to Thr21, Ser29 to Leu49, and Val61 to Val81.

Belongs to the complex I subunit 4L family. Core subunit of respiratory chain NADH dehydrogenase (Complex I) which is composed of 45 different subunits.

It is found in the mitochondrion inner membrane. The enzyme catalyses a ubiquinone + NADH + 5 H(+)(in) = a ubiquinol + NAD(+) + 4 H(+)(out). In terms of biological role, core subunit of the mitochondrial membrane respiratory chain NADH dehydrogenase (Complex I) which catalyzes electron transfer from NADH through the respiratory chain, using ubiquinone as an electron acceptor. Part of the enzyme membrane arm which is embedded in the lipid bilayer and involved in proton translocation. This chain is NADH-ubiquinone oxidoreductase chain 4L (MT-ND4L), found in Ochotona collaris (Collared pika).